A 131-amino-acid polypeptide reads, in one-letter code: MQLMDPEKMKKLLEKAKEKGWIADQNVEIKFVILDLKPKWMKCRRTKRLVFQFHMLGDAENKTLCGKTLEEYQILPERQENLVVTQVNMMLGGLGVLVFFDLCPECFGNVNRCEPLKEGEKEKLKEEGLTS.

This is an uncharacterized protein from Aquifex aeolicus (strain VF5).